Consider the following 241-residue polypeptide: 3-deoxy-manno-octulosonate cytidylyltransferase (241 aa).

Belongs to the KdsB family.

It is found in the cytoplasm. It catalyses the reaction 3-deoxy-alpha-D-manno-oct-2-ulosonate + CTP = CMP-3-deoxy-beta-D-manno-octulosonate + diphosphate. It participates in nucleotide-sugar biosynthesis; CMP-3-deoxy-D-manno-octulosonate biosynthesis; CMP-3-deoxy-D-manno-octulosonate from 3-deoxy-D-manno-octulosonate and CTP: step 1/1. It functions in the pathway bacterial outer membrane biogenesis; lipopolysaccharide biosynthesis. Functionally, activates KDO (a required 8-carbon sugar) for incorporation into bacterial lipopolysaccharide in Gram-negative bacteria. This chain is 3-deoxy-manno-octulosonate cytidylyltransferase, found in Rickettsia rickettsii (strain Sheila Smith).